Reading from the N-terminus, the 249-residue chain is Small ribosomal subunit protein uS2 (249 aa).

The protein belongs to the universal ribosomal protein uS2 family.

The chain is Small ribosomal subunit protein uS2 from Listeria monocytogenes serovar 1/2a (strain ATCC BAA-679 / EGD-e).